The sequence spans 812 residues: Phenylalanine--tRNA ligase beta subunit (812 aa).

One can recognise a tRNA-binding domain in the interval 39 to 155 (SKTFAPFTIA…ADAPVGAGYA (117 aa)). Positions 405–480 (PEDRVIDFPL…RIVGVDKVPM (76 aa)) constitute a B5 domain. Positions 458, 464, 467, and 468 each coordinate Mg(2+). Residues 718–811 (PAFQPVSRDF…VAKRTGGSLR (94 aa)) form the FDX-ACB domain.

The protein belongs to the phenylalanyl-tRNA synthetase beta subunit family. Type 1 subfamily. In terms of assembly, tetramer of two alpha and two beta subunits. The cofactor is Mg(2+).

It localises to the cytoplasm. The catalysed reaction is tRNA(Phe) + L-phenylalanine + ATP = L-phenylalanyl-tRNA(Phe) + AMP + diphosphate + H(+). This chain is Phenylalanine--tRNA ligase beta subunit, found in Nitrobacter winogradskyi (strain ATCC 25391 / DSM 10237 / CIP 104748 / NCIMB 11846 / Nb-255).